The following is a 273-amino-acid chain: Protein N-terminal and lysine N-methyltransferase EFM7 (273 aa).

Positions 1–32 (MSDIEDLASGGLFDEPKDFYKPEEQPGSDSYA) are disordered. Residues 14-24 (DEPKDFYKPEE) show a composition bias toward basic and acidic residues. Residues tryptophan 65, 92 to 94 (GAG), aspartate 114, tryptophan 161, and serine 183 contribute to the S-adenosyl-L-methionine site.

The protein belongs to the class I-like SAM-binding methyltransferase superfamily. EFM7 family.

It is found in the cytoplasm. Functionally, S-adenosyl-L-methionine-dependent protein methyltransferase that trimethylates the N-terminal glycine 'Gly-2' of elongation factor 1-alpha, before also catalyzing the mono- and dimethylation of 'Lys-3'. This Yarrowia lipolytica (strain CLIB 122 / E 150) (Yeast) protein is Protein N-terminal and lysine N-methyltransferase EFM7.